The sequence spans 284 residues: Tropomyosin-2 (284 aa).

Positions 1–284 form a coiled coil; it reads MDAIKKKMQA…DQTFAELTGY (284 aa). The tract at residues 82–110 is disordered; the sequence is ESEVATQNRKVQQIEEDLEKSEERSTTAQ.

It belongs to the tropomyosin family. As to quaternary structure, homodimer.

Functionally, tropomyosin, in association with the troponin complex, plays a central role in the calcium dependent regulation of muscle contraction. May also regulate motor systems required to maintain nuclear integrity and apico-basal polarity during embryogenesis. This chain is Tropomyosin-2 (Tm2), found in Drosophila melanogaster (Fruit fly).